The sequence spans 86 residues: U15-lycotoxin-Ls1d (86 aa).

The N-terminal stretch at 1-20 (MNSKIFAVLFLLAFLSCVLS) is a signal peptide. In terms of domain architecture, WAP spans 21–66 (DQYCPKSSITACKKMNIRNDCCKDDDCTGGSWCCATPCGNFCKYPT). Intrachain disulfides connect cysteine 24–cysteine 54, cysteine 32–cysteine 58, cysteine 41–cysteine 53, cysteine 42–cysteine 80, and cysteine 47–cysteine 62.

It belongs to the venom protein 11 family. 01 (wap-1) subfamily. In terms of processing, contains 5 disulfide bonds. Expressed by the venom gland.

It localises to the secreted. Functionally, has antibacterial activity. In Lycosa singoriensis (Wolf spider), this protein is U15-lycotoxin-Ls1d.